The chain runs to 380 residues: Cytochrome b (380 aa).

Helical transmembrane passes span 34 to 54, 78 to 99, 114 to 134, and 179 to 199; these read FGSLLGICLLTQILTGLLLAT, WLIRNLHANGASFFFICIYLHI, WNTGVILLLALMATAFVGYVL, and FFALHFLLPFMIAGLAFIHLT. Histidine 84 and histidine 98 together coordinate heme b. Heme b-binding residues include histidine 183 and histidine 197. Histidine 202 contributes to the a ubiquinone binding site. A run of 4 helical transmembrane segments spans residues 227–247, 289–309, 321–341, and 348–368; these read LKDILGFIIMFLPLTTLALFS, LGGVLALAASVLVLFLTPLLH, LSQLLFWTLVANLLILTWVGS, and FIIIGQLASLAYFTILLLLFP.

Belongs to the cytochrome b family. The cytochrome bc1 complex contains 11 subunits: 3 respiratory subunits (MT-CYB, CYC1 and UQCRFS1), 2 core proteins (UQCRC1 and UQCRC2) and 6 low-molecular weight proteins (UQCRH/QCR6, UQCRB/QCR7, UQCRQ/QCR8, UQCR10/QCR9, UQCR11/QCR10 and a cleavage product of UQCRFS1). This cytochrome bc1 complex then forms a dimer. Requires heme b as cofactor.

The protein resides in the mitochondrion inner membrane. Functionally, component of the ubiquinol-cytochrome c reductase complex (complex III or cytochrome b-c1 complex) that is part of the mitochondrial respiratory chain. The b-c1 complex mediates electron transfer from ubiquinol to cytochrome c. Contributes to the generation of a proton gradient across the mitochondrial membrane that is then used for ATP synthesis. This Uria lomvia (Thick-billed murre) protein is Cytochrome b (MT-CYB).